Consider the following 155-residue polypeptide: Regulatory protein RecX (155 aa).

The protein belongs to the RecX family.

It is found in the cytoplasm. Its function is as follows. Modulates RecA activity. The chain is Regulatory protein RecX from Vibrio parahaemolyticus serotype O3:K6 (strain RIMD 2210633).